The sequence spans 132 residues: MALTKPKKIPRYRRNKPEIRKVDKGIIHIRASFNNTIITVTNVLGCVISWSSAGACGFKGPKKGSAFAAQKATENVIRMVVINRATVLITGCGKGRDAALRVIHQNYIPIHAVLDVTPTPHNGCRPPVKRRI.

This sequence belongs to the universal ribosomal protein uS11 family. Part of the 30S ribosomal subunit.

The protein localises to the plastid. It is found in the chloroplast. In Gnetum parvifolium (Small-leaved jointfir), this protein is Small ribosomal subunit protein uS11c.